The sequence spans 100 residues: Urease subunit gamma (100 aa).

It belongs to the urease gamma subunit family. Heterotrimer of UreA (gamma), UreB (beta) and UreC (alpha) subunits. Three heterotrimers associate to form the active enzyme.

It localises to the cytoplasm. The enzyme catalyses urea + 2 H2O + H(+) = hydrogencarbonate + 2 NH4(+). It participates in nitrogen metabolism; urea degradation; CO(2) and NH(3) from urea (urease route): step 1/1. The sequence is that of Urease subunit gamma from Paracidovorax citrulli (strain AAC00-1) (Acidovorax citrulli).